The sequence spans 470 residues: ATP synthase subunit beta (470 aa).

Residue 155–162 participates in ATP binding; the sequence is GGAGVGKT.

It belongs to the ATPase alpha/beta chains family. As to quaternary structure, F-type ATPases have 2 components, CF(1) - the catalytic core - and CF(0) - the membrane proton channel. CF(1) has five subunits: alpha(3), beta(3), gamma(1), delta(1), epsilon(1). CF(0) has three main subunits: a(1), b(2) and c(9-12). The alpha and beta chains form an alternating ring which encloses part of the gamma chain. CF(1) is attached to CF(0) by a central stalk formed by the gamma and epsilon chains, while a peripheral stalk is formed by the delta and b chains.

The protein resides in the cell membrane. It catalyses the reaction ATP + H2O + 4 H(+)(in) = ADP + phosphate + 5 H(+)(out). Produces ATP from ADP in the presence of a proton gradient across the membrane. The catalytic sites are hosted primarily by the beta subunits. The sequence is that of ATP synthase subunit beta from Staphylococcus epidermidis (strain ATCC 35984 / DSM 28319 / BCRC 17069 / CCUG 31568 / BM 3577 / RP62A).